A 473-amino-acid polypeptide reads, in one-letter code: UDP-N-acetylmuramate--L-alanine ligase (473 aa).

ATP is bound at residue 123 to 129 (GSHGKTS).

The protein belongs to the MurCDEF family.

The protein resides in the cytoplasm. It catalyses the reaction UDP-N-acetyl-alpha-D-muramate + L-alanine + ATP = UDP-N-acetyl-alpha-D-muramoyl-L-alanine + ADP + phosphate + H(+). It functions in the pathway cell wall biogenesis; peptidoglycan biosynthesis. Its function is as follows. Cell wall formation. The protein is UDP-N-acetylmuramate--L-alanine ligase of Prochlorococcus marinus subsp. pastoris (strain CCMP1986 / NIES-2087 / MED4).